A 251-amino-acid chain; its full sequence is 5'-nucleotidase SurE (251 aa).

Residues D8, D9, S40, and N95 each contribute to the a divalent metal cation site.

The protein belongs to the SurE nucleotidase family. It depends on a divalent metal cation as a cofactor.

It is found in the cytoplasm. It carries out the reaction a ribonucleoside 5'-phosphate + H2O = a ribonucleoside + phosphate. In terms of biological role, nucleotidase that shows phosphatase activity on nucleoside 5'-monophosphates. The polypeptide is 5'-nucleotidase SurE (Desulfitobacterium hafniense (strain DSM 10664 / DCB-2)).